Consider the following 827-residue polypeptide: Probable beta-glucosidase H (827 aa).

Aspartate 223 is a catalytic residue. A PA14 domain is found at 387-546; sequence RLLTNAVMHF…DSAEMVRSAV (160 aa). 4 N-linked (GlcNAc...) asparagine glycosylation sites follow: asparagine 471, asparagine 594, asparagine 600, and asparagine 625.

It belongs to the glycosyl hydrolase 3 family.

The protein resides in the secreted. The catalysed reaction is Hydrolysis of terminal, non-reducing beta-D-glucosyl residues with release of beta-D-glucose.. Its pathway is glycan metabolism; cellulose degradation. Functionally, beta-glucosidases are one of a number of cellulolytic enzymes involved in the degradation of cellulosic biomass. Catalyzes the last step releasing glucose from the inhibitory cellobiose. This Aspergillus oryzae (strain ATCC 42149 / RIB 40) (Yellow koji mold) protein is Probable beta-glucosidase H (bglH).